The chain runs to 72 residues: Protein SlyX homolog (72 aa).

The protein belongs to the SlyX family.

The chain is Protein SlyX homolog from Bradyrhizobium diazoefficiens (strain JCM 10833 / BCRC 13528 / IAM 13628 / NBRC 14792 / USDA 110).